The chain runs to 361 residues: Adenosine kinase (361 aa).

A Nuclear localization signal motif is present at residues 7-15; it reads PKPKKLKVE. D34 provides a ligand contact to adenosine. Residue S48 coordinates Mg(2+). Residue Y76 is modified to Phosphotyrosine. Mg(2+) is bound at residue N147. Q305 contacts adenosine. Residue D316 is part of the active site. Residue D316 is the Proton acceptor of the active site.

This sequence belongs to the carbohydrate kinase PfkB family. In terms of assembly, monomer. The cofactor is Mg(2+).

The protein localises to the nucleus. The catalysed reaction is adenosine + ATP = AMP + ADP + H(+). It functions in the pathway purine metabolism; AMP biosynthesis via salvage pathway; AMP from adenosine: step 1/1. Functionally, catalyzes the phosphorylation of the purine nucleoside adenosine at the 5' position in an ATP-dependent manner. Serves as a potential regulator of concentrations of extracellular adenosine and intracellular adenine nucleotides. The chain is Adenosine kinase (Adk) from Rattus norvegicus (Rat).